Reading from the N-terminus, the 209-residue chain is Small ribosomal subunit protein uS4 (209 aa).

The 81-residue stretch at 99-179 (GRLDSVAYRM…FPEWIEVDAK (81 aa)) folds into the S4 RNA-binding domain.

The protein belongs to the universal ribosomal protein uS4 family. Part of the 30S ribosomal subunit. Contacts protein S5. The interaction surface between S4 and S5 is involved in control of translational fidelity.

One of the primary rRNA binding proteins, it binds directly to 16S rRNA where it nucleates assembly of the body of the 30S subunit. In terms of biological role, with S5 and S12 plays an important role in translational accuracy. The sequence is that of Small ribosomal subunit protein uS4 from Azoarcus sp. (strain BH72).